The following is a 233-amino-acid chain: 5-demethoxyubiquinone hydroxylase, mitochondrial (233 aa).

The N-terminal 15 residues, 1–15 (MLSRVSVFKPASRGF), are a transit peptide targeting the mitochondrion. Phosphoserine is present on residues Ser20 and Ser28. A Phosphothreonine modification is found at Thr32. Fe cation is bound by residues Glu63, Glu95, His98, Glu147, Glu194, and His197.

It belongs to the COQ7 family. In terms of assembly, component of a multi-subunit COQ enzyme complex, composed of at least COQ3, COQ4, COQ5, COQ6, COQ7 and COQ9. Fe cation is required as a cofactor. In terms of processing, phosphorylated. Dephosphorylated by PTC7; dephosphorylation is essential for enzyme activation.

Its subcellular location is the mitochondrion inner membrane. It catalyses the reaction a 5-methoxy-2-methyl-3-(all-trans-polyprenyl)benzene-1,4-diol + AH2 + O2 = a 3-demethylubiquinol + A + H2O. The enzyme catalyses a 5-methoxy-2-methyl-3-(all-trans-polyprenyl)benzoquinone + NADH + O2 = a 3-demethylubiquinone + NAD(+) + H2O. It functions in the pathway cofactor biosynthesis; ubiquinone biosynthesis. With respect to regulation, dephosphorylation by PTC7 leads to activation. Catalyzes the hydroxylation of 2-hexaprenyl-3-methyl-6-methoxy-1,4-benzoquinol (DMQH2) during ubiquinone biosynthesis. Also catalyzes the hydroxylation of the 5-methoxy-2-methyl-3-(all-trans-polyprenyl)benzoquinone at the C6 position and participates in the biosynthesis of ubiquinone. Also has a structural role in the COQ enzyme complex, stabilizing COQ3 and COQ4 polypeptides. This chain is 5-demethoxyubiquinone hydroxylase, mitochondrial, found in Saccharomyces cerevisiae (strain ATCC 204508 / S288c) (Baker's yeast).